The primary structure comprises 420 residues: Phosphatidylinositol 5-phosphate 4-kinase type-2 gamma (420 aa).

Alanine 2 is modified (N-acetylalanine). A Phosphoserine modification is found at serine 26. The PIPK domain maps to 43-419 (AADPLVGVFL…RFLDFISNIF (377 aa)). Residues 69–75 (VMLLPDD) are required for interaction with PIP5K1A. Serine 349 carries the phosphoserine modification.

Interacts with PIP5K1A; the interaction inhibits PIP5K1A kinase activity. Phosphorylated, phosphorylation is induced by EGF. In terms of tissue distribution, widely expressed, with the most abundant expression in kidney.

It localises to the endoplasmic reticulum. The protein resides in the cytoplasm. The catalysed reaction is a 1,2-diacyl-sn-glycero-3-phospho-(1D-myo-inositol-5-phosphate) + ATP = a 1,2-diacyl-sn-glycero-3-phospho-(1D-myo-inositol-4,5-bisphosphate) + ADP + H(+). The enzyme catalyses 1,2-dihexadecanoyl-sn-glycero-3-phospho-(1D-myo-inositol-5-phosphate) + ATP = 1,2-dihexadecanoyl-sn-glycero-3-phospho-(1D-myo-inositol-4,5-bisphosphate) + ADP + H(+). It carries out the reaction 1,2-dihexadecanoyl-sn-glycero-3-phospho-(1D-myo-inositol-5-phosphate) + GTP = 1,2-dihexadecanoyl-sn-glycero-3-phospho-(1D-myo-inositol-4,5-bisphosphate) + GDP + H(+). In terms of biological role, phosphatidylinositol 5-phosphate 4-kinase with low enzymatic activity. May be a GTP sensor, has higher GTP-dependent kinase activity than ATP-dependent kinase activity. PIP4Ks negatively regulate insulin signaling through a catalytic-independent mechanism. They interact with PIP5Ks and suppress PIP5K-mediated PtdIns(4,5)P2 synthesis and insulin-dependent conversion to PtdIns(3,4,5)P3. The polypeptide is Phosphatidylinositol 5-phosphate 4-kinase type-2 gamma (Rattus norvegicus (Rat)).